A 359-amino-acid polypeptide reads, in one-letter code: Protein disulfide-isomerase tigA (359 aa).

An N-terminal signal peptide occupies residues 1-19 (MVRLSNLVSCLGLASAVTA). 2 Thioredoxin domains span residues 20 to 129 (AVVD…EKTG) and 131 to 250 (KPRG…EKTG). Residues C49, C52, C169, and C172 each act as nucleophile in the active site. 2 disulfide bridges follow: C49–C52 and C169–C172. The Prevents secretion from ER motif lies at 356–359 (KDEL).

Belongs to the protein disulfide isomerase family.

It is found in the endoplasmic reticulum lumen. It catalyses the reaction Catalyzes the rearrangement of -S-S- bonds in proteins.. In Aspergillus niger, this protein is Protein disulfide-isomerase tigA (tigA).